The primary structure comprises 72 residues: Translation initiation factor IF-1 (72 aa).

Positions Met-1 to Arg-72 constitute an S1-like domain.

It belongs to the IF-1 family. In terms of assembly, component of the 30S ribosomal translation pre-initiation complex which assembles on the 30S ribosome in the order IF-2 and IF-3, IF-1 and N-formylmethionyl-tRNA(fMet); mRNA recruitment can occur at any time during PIC assembly.

It localises to the cytoplasm. Its function is as follows. One of the essential components for the initiation of protein synthesis. Stabilizes the binding of IF-2 and IF-3 on the 30S subunit to which N-formylmethionyl-tRNA(fMet) subsequently binds. Helps modulate mRNA selection, yielding the 30S pre-initiation complex (PIC). Upon addition of the 50S ribosomal subunit IF-1, IF-2 and IF-3 are released leaving the mature 70S translation initiation complex. This Methylococcus capsulatus (strain ATCC 33009 / NCIMB 11132 / Bath) protein is Translation initiation factor IF-1.